The following is a 268-amino-acid chain: Small ribosomal subunit protein eS1 (268 aa).

The tract at residues 1 to 21 (MAVGKNKGLSKGGKKGGKKKV) is disordered.

The protein belongs to the eukaryotic ribosomal protein eS1 family. As to quaternary structure, component of the small ribosomal subunit. Mature ribosomes consist of a small (40S) and a large (60S) subunit. The 40S subunit contains about 33 different proteins and 1 molecule of RNA (18S). The 60S subunit contains about 49 different proteins and 3 molecules of RNA (28S, 5.8S and 5S).

Its subcellular location is the cytoplasm. In terms of biological role, essential for oogenesis; required for late follicle cell development. The sequence is that of Small ribosomal subunit protein eS1 from Drosophila willistoni (Fruit fly).